We begin with the raw amino-acid sequence, 248 residues long: MKLDLVKRTFNYAVVNKPSGMVCDASHTNNIITALTNEFTKILPSVNSSQFRLVQRLDRFVTGGLVVARNKKWADKVRKSFFQEGTLRLTRRYVGLIALDQIPESTQGTIDFPIQALEKDYRGKNKSRELFTYSAVTHYKLIPSARRTIKGVFPVFQQGPILPIILELETGRKNQIRDHIIQKFGVPLLNDDNFSDFKLNSEIPKDVNSKLYKSNQIALHSGLVIMENNGISQQFLFPVNNAYDRELW.

The active site involves aspartate 58.

It belongs to the pseudouridine synthase RluA family.

It is found in the mitochondrion. It catalyses the reaction uridine(2819) in 21S rRNA = pseudouridine(2819) in 21S rRNA. Functionally, pseudouridylate synthase responsible for the pseudouridine-2819 formation in mitochondrial 21S rRNA. May modulate the efficiency or the fidelity of the mitochondrial translation machinery. This is 21S rRNA pseudouridine(2819) synthase (PUS5) from Candida albicans (strain SC5314 / ATCC MYA-2876) (Yeast).